The sequence spans 442 residues: Hydrolase phmG (442 aa).

Serine 259 acts as the Nucleophile in catalysis.

The protein belongs to the AB hydrolase superfamily. FUS2 hydrolase family. As to quaternary structure, homodimer.

Its pathway is mycotoxin biosynthesis. Functionally, hydrolyase; part of the gene cluster that mediates the biosynthesis of the mycotoxins phomacins, leucine-derived cytochalasans with potent actin polymerization-inhibitory activities and monocot-specific antigerminative activities. The first step in the pathway is catalyzed by the hybrid PKS-NRPS phmA, assisted by the enoyl reductase phmE, that are responsible for fusion of the leucine precursor and the polyketide backbone to produce a 2-pyrrolidone intermediate. The polyketide synthase module (PKS) of phmA is responsible for the synthesis of the polyketide backbone and the downstream nonribosomal peptide synthetase (NRPS) amidates the carboxyl end of the polyketide with the leucine precursor. Because phmA lacks a designated enoylreductase (ER) domain, the required activity is provided the enoyl reductase phmE. Reduction by the hydrolyase phmG, followed by dehydration and intra-molecular Diels-Alder cyclization by the Diels-Alderase phmD then yield the required isoindolone-fused macrocycle. A number of oxidative steps catalyzed by the tailoring cytochrome P450 monooxygenase phmB, the FAD-linked oxidoreductase phmC and the short-chain dehydrogenase/reductase phmF, are further required to afford the final products, phomacin D and phomacin E. The protein is Hydrolase phmG of Phaeosphaeria nodorum (strain SN15 / ATCC MYA-4574 / FGSC 10173) (Glume blotch fungus).